The chain runs to 207 residues: Imidazole glycerol phosphate synthase subunit HisH (207 aa).

One can recognise a Glutamine amidotransferase type-1 domain in the interval 1-207 (MIGIIDYGMG…KRFGQLVEGN (207 aa)). The Nucleophile role is filled by Cys79. Active-site residues include His185 and Glu187.

As to quaternary structure, heterodimer of HisH and HisF.

Its subcellular location is the cytoplasm. It catalyses the reaction 5-[(5-phospho-1-deoxy-D-ribulos-1-ylimino)methylamino]-1-(5-phospho-beta-D-ribosyl)imidazole-4-carboxamide + L-glutamine = D-erythro-1-(imidazol-4-yl)glycerol 3-phosphate + 5-amino-1-(5-phospho-beta-D-ribosyl)imidazole-4-carboxamide + L-glutamate + H(+). The enzyme catalyses L-glutamine + H2O = L-glutamate + NH4(+). Its pathway is amino-acid biosynthesis; L-histidine biosynthesis; L-histidine from 5-phospho-alpha-D-ribose 1-diphosphate: step 5/9. IGPS catalyzes the conversion of PRFAR and glutamine to IGP, AICAR and glutamate. The HisH subunit catalyzes the hydrolysis of glutamine to glutamate and ammonia as part of the synthesis of IGP and AICAR. The resulting ammonia molecule is channeled to the active site of HisF. In Shouchella clausii (strain KSM-K16) (Alkalihalobacillus clausii), this protein is Imidazole glycerol phosphate synthase subunit HisH.